Consider the following 719-residue polypeptide: Potassium-transporting ATPase ATP-binding subunit (719 aa).

4 helical membrane-spanning segments follow: residues 35-55 (LFVV…PGLF), 62-82 (VYYA…NYAE), 228-248 (ILLS…FFFG), and 254-274 (FVGG…VALM). The active-site 4-aspartylphosphate intermediate is the Asp318. ATP is bound by residues Asp355 and Glu359. The segment at 372–396 (GKVQTDGGQSASEELDEPGDSVDAP) is disordered. The span at 373 to 383 (KVQTDGGQSAS) shows a compositional bias: polar residues. ATP contacts are provided by residues 416-423 (FSAETRMS) and Lys435. Mg(2+)-binding residues include Asp554 and Asp558. 3 helical membrane passes run 624-644 (FVLL…MDIL), 652-672 (AVTA…PLAL), and 698-718 (LIAP…LGVF).

Belongs to the cation transport ATPase (P-type) (TC 3.A.3) family. Type IA subfamily. The system is composed of three essential subunits: KdpA, KdpB and KdpC. The complex also contains KdpF, a small non-essential subunit.

It localises to the cell membrane. It catalyses the reaction K(+)(out) + ATP + H2O = K(+)(in) + ADP + phosphate + H(+). Its function is as follows. Part of the high-affinity ATP-driven potassium transport (or Kdp) system, which catalyzes the hydrolysis of ATP coupled with the electrogenic transport of potassium into the cytoplasm. This subunit is responsible for energy coupling to the transport system and for the release of the potassium ions to the cytoplasm. The Kdp system is essential for growth under K(+) limitation, and for survival under desiccation and salt crystal inclusion. This Halobacterium salinarum (strain ATCC 29341 / DSM 671 / R1) protein is Potassium-transporting ATPase ATP-binding subunit.